A 215-amino-acid polypeptide reads, in one-letter code: Pyrrolidone-carboxylate peptidase (215 aa).

Active-site residues include glutamate 80, cysteine 143, and histidine 167.

This sequence belongs to the peptidase C15 family. In terms of assembly, homotetramer.

The protein localises to the cytoplasm. The catalysed reaction is Release of an N-terminal pyroglutamyl group from a polypeptide, the second amino acid generally not being Pro.. Its function is as follows. Removes 5-oxoproline from various penultimate amino acid residues except L-proline. The sequence is that of Pyrrolidone-carboxylate peptidase from Bacillus cereus (strain AH820).